The chain runs to 266 residues: Undecaprenyl-diphosphatase (266 aa).

7 helical membrane passes run 41–61 (YAYS…LIYF), 82–102 (LVYI…LYYV), 106–126 (WLVV…AVVL), 159–179 (AVSV…LLLL), 191–211 (FVLV…SEGG), 213–233 (VATA…IITI), and 246–266 (VLVN…RIIF).

This sequence belongs to the UppP family.

Its subcellular location is the cell membrane. The catalysed reaction is di-trans,octa-cis-undecaprenyl diphosphate + H2O = di-trans,octa-cis-undecaprenyl phosphate + phosphate + H(+). Catalyzes the dephosphorylation of undecaprenyl diphosphate (UPP). The chain is Undecaprenyl-diphosphatase from Pyrobaculum aerophilum (strain ATCC 51768 / DSM 7523 / JCM 9630 / CIP 104966 / NBRC 100827 / IM2).